The chain runs to 203 residues: Recombination protein RecR (203 aa).

The C4-type zinc-finger motif lies at 58–73; the sequence is CDYCGNLDIVSICNIC. Residues 81–177 enclose the Toprim domain; sequence STIAVVESVA…KISKLASGIP (97 aa).

It belongs to the RecR family.

May play a role in DNA repair. It seems to be involved in an RecBC-independent recombinational process of DNA repair. It may act with RecF and RecO. The chain is Recombination protein RecR from Orientia tsutsugamushi (strain Ikeda) (Rickettsia tsutsugamushi).